Consider the following 215-residue polypeptide: Cytochrome b6 (215 aa).

A helical membrane pass occupies residues 32–52 (IFYCLGGITLTCFLVQVATGF). Residue Cys35 participates in heme c binding. Heme b contacts are provided by His86 and His100. Transmembrane regions (helical) follow at residues 90–110 (ASMM…TGGF), 116–136 (LTWV…VTGY), and 186–206 (LHTF…FLMI). The heme b site is built by His187 and His202.

This sequence belongs to the cytochrome b family. PetB subfamily. As to quaternary structure, the 4 large subunits of the cytochrome b6-f complex are cytochrome b6, subunit IV (17 kDa polypeptide, PetD), cytochrome f and the Rieske protein, while the 4 small subunits are PetG, PetL, PetM and PetN. The complex functions as a dimer. The cofactor is heme b. Heme c is required as a cofactor.

It is found in the plastid. The protein resides in the chloroplast thylakoid membrane. In terms of biological role, component of the cytochrome b6-f complex, which mediates electron transfer between photosystem II (PSII) and photosystem I (PSI), cyclic electron flow around PSI, and state transitions. The chain is Cytochrome b6 from Welwitschia mirabilis (Tree tumbo).